Reading from the N-terminus, the 161-residue chain is Nucleotide-binding protein Rmet_2899 (161 aa).

Belongs to the YajQ family.

Nucleotide-binding protein. In Cupriavidus metallidurans (strain ATCC 43123 / DSM 2839 / NBRC 102507 / CH34) (Ralstonia metallidurans), this protein is Nucleotide-binding protein Rmet_2899.